A 620-amino-acid chain; its full sequence is Pentatricopeptide repeat-containing protein At5g66520 (620 aa).

PPR repeat units lie at residues aspartate 79–histidine 113, asparagine 114–asparagine 148, aspartate 149–proline 179, aspartate 180–lysine 210, asparagine 211–proline 245, aspartate 246–methionine 280, aspartate 281–lysine 311, serine 312–proline 346, asparagine 347–proline 382, and threonine 383–lysine 413. Residues isoleucine 418–glutamate 493 form a type E motif region. Positions glycine 494–glutamate 524 are type E(+) motif. Positions glutamate 525–tryptophan 620 are type DYW motif.

This sequence belongs to the PPR family. PCMP-H subfamily.

The chain is Pentatricopeptide repeat-containing protein At5g66520 (PCMP-H61) from Arabidopsis thaliana (Mouse-ear cress).